The chain runs to 57 residues: MAVPARHTSSAKKNRRRTHYKLTAPTVTFDETTGDYRHSHRVSLKGYYKGRKVRDTK.

Residues 1–23 form a disordered region; that stretch reads MAVPARHTSSAKKNRRRTHYKLT. Over residues 9-20 the composition is skewed to basic residues; it reads SSAKKNRRRTHY.

The protein belongs to the bacterial ribosomal protein bL32 family.

The chain is Large ribosomal subunit protein bL32 from Lactococcus lactis subsp. cremoris (strain MG1363).